The chain runs to 70 residues: Small ribosomal subunit protein bS21 (70 aa).

The span at 48–61 (KLAAAVKRQSKRLR) shows a compositional bias: basic residues. Residues 48-70 (KLAAAVKRQSKRLRSQQLPPKMY) are disordered.

The protein belongs to the bacterial ribosomal protein bS21 family.

This Thiobacillus denitrificans (strain ATCC 25259 / T1) protein is Small ribosomal subunit protein bS21.